Reading from the N-terminus, the 272-residue chain is NAD kinase (272 aa).

Aspartate 50 (proton acceptor) is an active-site residue. Residues 50 to 51, 126 to 127, arginine 152, aspartate 154, 165 to 170, and alanine 189 contribute to the NAD(+) site; these read DG, NE, and TAYNKS.

The protein belongs to the NAD kinase family. Requires a divalent metal cation as cofactor.

The protein resides in the cytoplasm. The enzyme catalyses NAD(+) + ATP = ADP + NADP(+) + H(+). In terms of biological role, involved in the regulation of the intracellular balance of NAD and NADP, and is a key enzyme in the biosynthesis of NADP. Catalyzes specifically the phosphorylation on 2'-hydroxyl of the adenosine moiety of NAD to yield NADP. The polypeptide is NAD kinase (Streptococcus pneumoniae (strain 70585)).